The sequence spans 550 residues: MSPTISHKDNSRQRRSGMFGHALDMKSGPLPPGGWDDNHQDSVGGEGDREVLLGDVGPGDFPKAKRSYRAELSSILLLLFLYVLQGIPLGLAGSIPLILQSKNVSYTDQAFFSFVFWPFSLKLLWAPLVDAVYFKNFGRRKSWLVPTQYILGIFMIYLSTQVDRLLGNIDGRTPDVVALTVTFFLFEFLAATQDIAVDGWALTMLSRENVGYASTCNSVGQTAGYFLGNVLFLALESADFCNKYLRFQPQPRGIVTLSDFLFFWGTVFLITTTLVALLKKETREASVVKEETQGITDTYKLLFSIIKMPAVLAFCLLILTSKIGFSAADAVTGLKLVEEGVPKEHLALLAVPMVPLQIILPLLISKYTAGPQPLNIFYKAMPYRLLLGLEYALLVWWTPKVEHQGGFPIYYYIIVLLSYALHQVTLYSMYVSIMAFNAKVSDPLIGGTYMTLLNTVSNLGGNWPSTVALWLVDPLTVKECVGASNQNCRTPEAIELCKKLGGSCVTALDGYYVESIVCVLIGFGWWFFLGPKFKKLQDEGPSSWKCKRTN.

The Cytoplasmic portion of the chain corresponds to 1 to 74; sequence MSPTISHKDN…KRSYRAELSS (74 aa). The residue at position 42 (Ser42) is a Phosphoserine. Residues 75 to 95 traverse the membrane as a helical segment; that stretch reads ILLLLFLYVLQGIPLGLAGSI. At 96-113 the chain is on the extracellular side; the sequence is PLILQSKNVSYTDQAFFS. Asn103 is a glycosylation site (N-linked (GlcNAc...) asparagine). The chain crosses the membrane as a helical span at residues 114–134; the sequence is FVFWPFSLKLLWAPLVDAVYF. Topologically, residues 135–141 are cytoplasmic; it reads KNFGRRK. Residues 142–162 form a helical membrane-spanning segment; it reads SWLVPTQYILGIFMIYLSTQV. The Extracellular portion of the chain corresponds to 163–256; that stretch reads DRLLGNIDGR…FQPQPRGIVT (94 aa). The chain crosses the membrane as a helical span at residues 257-277; that stretch reads LSDFLFFWGTVFLITTTLVAL. Over 278–300 the chain is Cytoplasmic; it reads LKKETREASVVKEETQGITDTYK. A helical transmembrane segment spans residues 301-321; the sequence is LLFSIIKMPAVLAFCLLILTS. Residues 322 to 344 lie on the Extracellular side of the membrane; the sequence is KIGFSAADAVTGLKLVEEGVPKE. Residues 345–365 traverse the membrane as a helical segment; the sequence is HLALLAVPMVPLQIILPLLIS. Residues 366-375 lie on the Cytoplasmic side of the membrane; that stretch reads KYTAGPQPLN. A helical membrane pass occupies residues 376-396; the sequence is IFYKAMPYRLLLGLEYALLVW. Topologically, residues 397–405 are extracellular; that stretch reads WTPKVEHQG. A helical transmembrane segment spans residues 406–426; that stretch reads GFPIYYYIIVLLSYALHQVTL. Over 427-509 the chain is Cytoplasmic; the sequence is YSMYVSIMAF…LGGSCVTALD (83 aa). Residues 510–530 form a helical membrane-spanning segment; the sequence is GYYVESIVCVLIGFGWWFFLG. Topologically, residues 531–550 are extracellular; sequence PKFKKLQDEGPSSWKCKRTN.

This sequence belongs to the SLC33A transporter family. Homodimerizes. As to expression, expressed in brain at all developmental stages. Detected in hippocampus, hypothalamus, cerebellum, cortex, olfactory bulb, and the ventral and dorsal anterior olfactory nucleus.

It localises to the endoplasmic reticulum membrane. The enzyme catalyses acetyl-CoA(in) = acetyl-CoA(out). Functionally, acetyl-CoA transporter that mediates active acetyl-CoA import through the endoplasmic reticulum (ER) membrane into the ER lumen where specific ER-based acetyl-CoA:lysine acetyltransferases are responsible for the acetylation of ER-based protein substrates, such as BACE1. Necessary for O-acetylation of gangliosides. The protein is Acetyl-coenzyme A transporter 1 (Slc33a1) of Rattus norvegicus (Rat).